The chain runs to 437 residues: Putrescine hydroxycinnamoyltransferase 3 (437 aa).

Catalysis depends on proton acceptor residues His-151 and Asp-383.

This sequence belongs to the plant acyltransferase family. In terms of tissue distribution, highly expressed in roots. Expressed at low levels in shoots and flowers.

Hydroxycinnamoyl transferase that catalyzes the transfer of an acyl from p-coumaryol-CoA to putrescine, to produce coumaroyl putrescine. Can use feruloyl-CoA and caffeoyl-CoA as acyl donors. This chain is Putrescine hydroxycinnamoyltransferase 3, found in Oryza sativa subsp. japonica (Rice).